The sequence spans 279 residues: MIDSKTKLIGLIGHPVEHSFSPIMHNAAIKDLGINYTYLAFDVSEENLKYIVSGAKALQIAGFNVTIPHKINIMKYLDEIDEDAKSIGAVNTVKIENGKTIGYNTDGIGVKRALEEKSGILINKNILIIGSGGASRAVSFELAKENNLTIVNRNIEKAKILSEELSTKLKKENSIKYGALNIDIKNFDIIINTTPVGMYPDTDVNPVIPLNDIKKSAVVMDLIYNPLEPVFLKEAMKYGVETINGLGMLVYQGAVSFQIWTGKKPDVYVMKKAINSKIR.

Shikimate contacts are provided by residues 19–21 (SFS) and T66. K70 (proton acceptor) is an active-site residue. E82 provides a ligand contact to NADP(+). Residues N91 and D106 each coordinate shikimate. Residues 130–134 (GSGGA) and L222 contribute to the NADP(+) site. Residue Y224 participates in shikimate binding. G245 provides a ligand contact to NADP(+).

It belongs to the shikimate dehydrogenase family. Homodimer.

The enzyme catalyses shikimate + NADP(+) = 3-dehydroshikimate + NADPH + H(+). The protein operates within metabolic intermediate biosynthesis; chorismate biosynthesis; chorismate from D-erythrose 4-phosphate and phosphoenolpyruvate: step 4/7. In terms of biological role, involved in the biosynthesis of the chorismate, which leads to the biosynthesis of aromatic amino acids. Catalyzes the reversible NADPH linked reduction of 3-dehydroshikimate (DHSA) to yield shikimate (SA). This is Shikimate dehydrogenase (NADP(+)) from Methanococcus maripaludis (strain C6 / ATCC BAA-1332).